The primary structure comprises 361 residues: Cytochrome c peroxidase, mitochondrial (361 aa).

The N-terminal 67 residues, 1–67 (MTTAVRLLPS…NWGKAAALAS (67 aa)), are a transit peptide targeting the mitochondrion. Residue His-119 is the Proton acceptor of the active site. A Phosphotyrosine modification is found at Tyr-220. Residue His-242 coordinates heme b. Trp-258 acts as the Tryptophan radical intermediate in catalysis.

The protein belongs to the peroxidase family. Cytochrome c peroxidase subfamily. In terms of assembly, forms a one-to-one complex with cytochrome c. Heme b serves as cofactor. In terms of processing, CCP1 precursor is processed by the rhomboid protease PCP1, which cleaves the N-terminal hydrophobic transit peptide. The m-AAA protease (composed of YTA12/RCA1 and YTA10/AFG3) is required for CCP1 maturation: m-AAA protease promotes membrane dislocation of the CCP1 transmembrane segment within the transit peptide to ensure the correct positioning of CCP1 within the membrane bilayer, allowing intramembrane cleavage by PCP1.

It is found in the mitochondrion matrix. The protein localises to the mitochondrion intermembrane space. The enzyme catalyses 2 Fe(II)-[cytochrome c] + H2O2 + 2 H(+) = 2 Fe(III)-[cytochrome c] + 2 H2O. Destroys radicals which are normally produced within the cells and which are toxic to biological systems. In Saccharomyces cerevisiae (strain ATCC 204508 / S288c) (Baker's yeast), this protein is Cytochrome c peroxidase, mitochondrial (CCP1).